The following is a 152-amino-acid chain: D-aminoacyl-tRNA deacylase (152 aa).

Residues 142 to 143 (GP) carry the Gly-cisPro motif, important for rejection of L-amino acids motif.

This sequence belongs to the DTD family. As to quaternary structure, homodimer.

Its subcellular location is the cytoplasm. The enzyme catalyses glycyl-tRNA(Ala) + H2O = tRNA(Ala) + glycine + H(+). It catalyses the reaction a D-aminoacyl-tRNA + H2O = a tRNA + a D-alpha-amino acid + H(+). An aminoacyl-tRNA editing enzyme that deacylates mischarged D-aminoacyl-tRNAs. Also deacylates mischarged glycyl-tRNA(Ala), protecting cells against glycine mischarging by AlaRS. Acts via tRNA-based rather than protein-based catalysis; rejects L-amino acids rather than detecting D-amino acids in the active site. By recycling D-aminoacyl-tRNA to D-amino acids and free tRNA molecules, this enzyme counteracts the toxicity associated with the formation of D-aminoacyl-tRNA entities in vivo and helps enforce protein L-homochirality. This is D-aminoacyl-tRNA deacylase from Burkholderia multivorans (strain ATCC 17616 / 249).